Here is a 151-residue protein sequence, read N- to C-terminus: Deoxyuridine 5'-triphosphate nucleotidohydrolase (151 aa).

Residues Arg70 to Gly72, Asn83, Leu87 to Asp89, and Met97 contribute to the substrate site.

Belongs to the dUTPase family. Mg(2+) serves as cofactor.

It catalyses the reaction dUTP + H2O = dUMP + diphosphate + H(+). It functions in the pathway pyrimidine metabolism; dUMP biosynthesis; dUMP from dCTP (dUTP route): step 2/2. This enzyme is involved in nucleotide metabolism: it produces dUMP, the immediate precursor of thymidine nucleotides and it decreases the intracellular concentration of dUTP so that uracil cannot be incorporated into DNA. The chain is Deoxyuridine 5'-triphosphate nucleotidohydrolase from Mannheimia succiniciproducens (strain KCTC 0769BP / MBEL55E).